A 127-amino-acid polypeptide reads, in one-letter code: Large ribosomal subunit protein bL12 (127 aa).

A disordered region spans residues 101-127 (VKTGVSKEEAEDAKKQLVESGAEVEIK). Residues 105–117 (VSKEEAEDAKKQL) show a composition bias toward basic and acidic residues.

This sequence belongs to the bacterial ribosomal protein bL12 family. In terms of assembly, homodimer. Part of the ribosomal stalk of the 50S ribosomal subunit. Forms a multimeric L10(L12)X complex, where L10 forms an elongated spine to which 2 to 4 L12 dimers bind in a sequential fashion. Binds GTP-bound translation factors.

In terms of biological role, forms part of the ribosomal stalk which helps the ribosome interact with GTP-bound translation factors. Is thus essential for accurate translation. In Geobacter metallireducens (strain ATCC 53774 / DSM 7210 / GS-15), this protein is Large ribosomal subunit protein bL12.